A 4836-amino-acid polypeptide reads, in one-letter code: E3 ubiquitin-protein ligase HERC2 (4836 aa).

Positions 58–90 (LPLRKDDGVDAQSGTKKEDLNDKEKKEEEETPA) are disordered. A compositionally biased stretch (basic and acidic residues) spans 72-85 (TKKEDLNDKEKKEE). The residue at position 273 (Thr-273) is a Phosphothreonine. One copy of the RCC1 1-1 repeat lies at 416-462 (PTSHKGSLQEVIGWGLIGWKYYANVIGPIQCEGLASLGVMQVACAEK). One copy of the RCC1 1-2 repeat lies at 463–513 (RFLILSRNGRVYTQAYNSDMLAPQLVQGLASRNIVKIAAHSDGHHYLALAA). Residues 514 to 569 (TGEVYSWGCGDGGRLGHGDTVPLEEPKVISAFSGKQAGKHVVHIACGSTYSAAITA) form an RCC1 1-3 repeat. An RCC1 1-4 repeat occupies 570–621 (EGELYTWGRGNYGRLGHGSSEDEAIPMLVAGLKGLKVIDVACGSGDAQTLAV). Residues 624-675 (NGQVWSWGDGDYGKLGRGGSDGCKTPKLIEKLQDLDVIKVRCGSQFSIALTK) form an RCC1 1-5 repeat. At Thr-648 the chain carries Phosphothreonine. One copy of the RCC1 1-6 repeat lies at 676-727 (DGQVYSWGKGDNQRLGHGTEEHVRYPKLLEGLQGKKVIDVAAGSTHCLALTE). Residues 729–779 (SEVHSWGSNDQCQHFDTLRVTKPEPTALPGLDSKHIVGIACGPAQSFAWSS) form an RCC1 1-7 repeat. Residues 948 to 981 (ALNAAITAEIQDIEAKKEAQKEKEIDEQEASAST) adopt a coiled-coil conformation. The 77-residue stretch at 1208–1284 (VTLIRKADLE…MHAFCVGQYL (77 aa)) folds into the Cytochrome b5 heme-binding domain. Position 1578 is a phosphoserine (Ser-1578). The 74-residue stretch at 1860–1933 (SGPELAAMMK…KYDLKLVELP (74 aa)) folds into the MIB/HERC2 domain. Ser-1943 carries the post-translational modification Phosphoserine. Residue Thr-1945 is modified to Phosphothreonine. Residues 2351–2376 (GTGTLQTDDGAAASPDLGDMSPEGPQ) form a disordered region. Phosphoserine is present on Ser-2455. The CPH domain occupies 2555–2631 (RADFLSNDDY…RYIHVELIGY (77 aa)). The segment at 2704–2756 (HPGVTCDGCQTFPINGSRFKCRNCDDFDFCETCFKTKKHNTRHTFGRINEPGQ) adopts a ZZ-type zinc-finger fold. Zn(2+) contacts are provided by Cys-2709, Cys-2712, Cys-2724, Cys-2727, Cys-2733, Cys-2736, His-2742, and His-2746. Positions 2760–2937 (FCGRSGKQLK…ASDNEEEEDD (178 aa)) constitute a DOC domain. Residues 2928 to 2947 (ASDNEEEEDDKGSTGSLIRK) are disordered. At Ser-2929 the chain carries Phosphoserine. An RCC1 2-1 repeat occupies 2959-3010 (RTKVFVWGLNDKDQLGGLKGSKIKVPSFSETLSALNVVQVAGGSKSLFAVTV). Residues 3011-3065 (EGKVYSCGEATNGRLGLGMSSGTVPIPRQITALSSYVVKKVAVHSGGRHATALTV) form an RCC1 2-2 repeat. One copy of the RCC1 2-3 repeat lies at 3066-3117 (DGKVFSWGEGDDGKLGHFSRMNCDKPRLIEALKTKRIRDIACGSSHSAALTS). The RCC1 2-4 repeat unit spans residues 3119–3169 (GELYTWGLGEYGRLGHGDNTTQLKPKMVKVLLGHRVIQVACGSRDAQTLAL). An RCC1 2-5 repeat occupies 3172–3223 (EGLVFSWGDGDFGKLGRGGSEGCNIPQNIERLNGQGVCQIECGAQFSLALTK). The stretch at 3225–3275 (GVVWTWGKGDYFRLGHGSDVHVRKPQVVEGLRGKKIVHVAVGALHCLAVTD) is one RCC1 2-6 repeat. One copy of the RCC1 2-7 repeat lies at 3276 to 3327 (SGQVYAWGDNDHGQQGNGTTTVNRKPTLVQGLEGQKITRVACGSSHSVAWTT). Disordered regions lie at residues 3479–3499 (DAVT…RPFI), 3517–3537 (KTKE…QSLD), and 3604–3632 (SQSG…SGTV). Over residues 3480–3495 (AVTPSAVTPSAPSASS) the composition is skewed to low complexity. Composition is skewed to polar residues over residues 3604–3613 (SQSGRLSSQP) and 3620–3631 (HPYTDDTSTSGT). One copy of the RCC1 3-1 repeat lies at 3953 to 4004 (SGTIYGWGHNHRGQLGGIEGAKVKVPTPCEALATLRPVQLIGGEQTLFAVTA). The RCC1 3-2 repeat unit spans residues 4006–4058 (GKLYATGYGAGGRLGIGGTESVSTPTLLESIQHVFIKKVAVNSGGKHCLALSS). Residues 4060–4110 (GEVYSWGEAEDGKLGHGNRSPCDRPRVIESLRGIEVVDVAAGGAHSACVTA) form an RCC1 3-3 repeat. The stretch at 4112 to 4164 (GDLYTWGKGRYGRLGHSDSEDQLKPKLVEALQGHRVIDIACGSGDAQTLCLTD) is one RCC1 3-4 repeat. The RCC1 3-5 repeat unit spans residues 4166 to 4216 (DTVWSWGDGDYGKLGRGGSDGCKVPMKIDSLTGLGVVKVECGSQFSVALTK). An RCC1 3-6 repeat occupies 4218 to 4268 (GAVYTWGKGDYHRLGHGSDDHVRRPRQVQGLQGKKVIAIATGSLHCVCCTE). Residues 4270-4320 (GEVYTWGDNDEGQLGDGTTNAIQRPRLVAALQGKKVNRVACGSAHTLAWST) form an RCC1 3-7 repeat. The 338-residue stretch at 4459–4796 (DSLLLPHRVW…IHFCKSIDTD (338 aa)) folds into the HECT domain. Cys-4764 (glycyl thioester intermediate) is an active-site residue. Residues 4806-4836 (EPAADDSSEDSDNEDADSFASDSTQDYLTGH) form a disordered region. Positions 4808–4822 (AADDSSEDSDNEDAD) are enriched in acidic residues. Phosphoserine occurs at positions 4812, 4813, and 4816. At Thr-4829 the chain carries Phosphothreonine.

In terms of assembly, interacts (when phosphorylated at Thr-4829 and sumoylated) with RNF8 (via FHA domain); this interaction increases after ionising radiation (IR) treatment. Interacts with XPA. Interacts with NEURL4. Via its interaction with NEURL4, may indirectly interact with CCP110 and CEP97. Phosphorylation at Thr-4829 is required for interaction with RNF8. Post-translationally, sumoylated with SUMO1 by PIAS4 in response to double-strand breaks (DSBs), promoting the interaction with RNF8. As to expression, highest levels are found in brain and testis with lower levels in heart, lung, liver, skeletal muscle and kidney. Little expression detected in spleen.

The protein resides in the cytoplasm. Its subcellular location is the cytoskeleton. It localises to the microtubule organizing center. The protein localises to the centrosome. It is found in the centriole. The protein resides in the nucleus. It carries out the reaction S-ubiquitinyl-[E2 ubiquitin-conjugating enzyme]-L-cysteine + [acceptor protein]-L-lysine = [E2 ubiquitin-conjugating enzyme]-L-cysteine + N(6)-ubiquitinyl-[acceptor protein]-L-lysine.. It functions in the pathway protein modification; protein ubiquitination. Functionally, E3 ubiquitin-protein ligase that regulates ubiquitin-dependent retention of repair proteins on damaged chromosomes. Recruited to sites of DNA damage in response to ionizing radiation (IR) and facilitates the assembly of UBE2N and RNF8 promoting DNA damage-induced formation of 'Lys-63'-linked ubiquitin chains. Acts as a mediator of binding specificity between UBE2N and RNF8. Involved in the maintenance of RNF168 levels. E3 ubiquitin-protein ligase that promotes the ubiquitination and proteasomal degradation of XPA which influences the circadian oscillation of DNA excision repair activity. By controlling the steady-state expression of the IGF1R receptor, indirectly regulates the insulin-like growth factor receptor signaling pathway. Also modulates iron metabolism by regulating the basal turnover of FBXL5. This Mus musculus (Mouse) protein is E3 ubiquitin-protein ligase HERC2.